Here is a 179-residue protein sequence, read N- to C-terminus: Guanosine-3',5'-bis(diphosphate) 3'-pyrophosphohydrolase MESH1 (179 aa).

N-acetylglycine is present on Gly-2. Lys-25 is modified (N6-acetyllysine). The HD domain occupies Tyr-32–Leu-127. Mn(2+)-binding residues include His-35, His-61, and Asp-62. Active-site nucleophile residues include Glu-65 and Asp-66. At Lys-97 the chain carries N6-acetyllysine. Position 122 (Asp-122) interacts with Mn(2+). Lys-123 carries the N6-acetyllysine modification.

The protein belongs to the MESH1 family. Requires Mn(2+) as cofactor.

It carries out the reaction guanosine 3',5'-bis(diphosphate) + H2O = GDP + diphosphate + H(+). In terms of biological role, ppGpp hydrolyzing enzyme involved in starvation response. In Mus musculus (Mouse), this protein is Guanosine-3',5'-bis(diphosphate) 3'-pyrophosphohydrolase MESH1 (Hddc3).